The chain runs to 259 residues: Protein unc-50 homolog (259 aa).

Met1 bears the N-acetylmethionine mark. The segment covering 1 to 17 (MLPSTSVNSPAQGNGVL) has biased composition (polar residues). Positions 1-22 (MLPSTSVNSPAQGNGVLSSRDA) are disordered. Residues 1–82 (MLPSTSVNSP…TKDQWARDDP (82 aa)) lie on the Cytoplasmic side of the membrane. Residue Ser6 is modified to Phosphoserine. Residues 83 to 103 (AFLVLLSIWLCVSTIGFGFVL) form a helical membrane-spanning segment. At 104–115 (DMGFFETIKLLL) the chain is on the lumenal side. The chain crosses the membrane as a helical span at residues 116–136 (WVVFIDCVGVGLLISTLMWFI). The Cytoplasmic portion of the chain corresponds to 137–163 (SNKYLVKRQSRDYDVEWGYAFDVHLNA). A helical transmembrane segment spans residues 164–184 (FYPLLVILHFIQLFFINHVIL). At 185–187 (TDT) the chain is on the lumenal side. The helical transmembrane segment at 188 to 208 (FIGYLVGNTLWLVAVGYYIYV) threads the bilayer. Over 209 to 222 (TFLGYSALPFLKNT) the chain is Cytoplasmic. Residues 223 to 243 (VILLYPFAPLILLYGLSLALG) form a helical membrane-spanning segment. Topologically, residues 244–259 (WNFTHTLCSFYKYRVK) are lumenal.

The protein belongs to the unc-50 family.

The protein resides in the nucleus inner membrane. The protein localises to the golgi apparatus membrane. Its function is as follows. Involved in the cell surface expression of neuronal nicotinic receptors. Binds RNA. The sequence is that of Protein unc-50 homolog (UNC50) from Bos taurus (Bovine).